We begin with the raw amino-acid sequence, 554 residues long: Probable efflux pump gsfJ (554 aa).

The next 14 membrane-spanning stretches (helical) occupy residues L54–I74, S93–Y115, I120–V140, A152–A172, L181–G201, K206–F226, L248–G268, V279–Y299, I321–F341, P349–V369, I379–Y399, W410–S430, I447–F467, and V518–W538.

Belongs to the major facilitator superfamily.

It localises to the membrane. In terms of biological role, probable efflux pump; part of the gene cluster that mediates the biosynthesis of griseofulvin. In Penicillium aethiopicum, this protein is Probable efflux pump gsfJ.